Consider the following 294-residue polypeptide: Acetylglutamate kinase (294 aa).

Residues 69 to 70 (GG), R91, and N190 contribute to the substrate site.

Belongs to the acetylglutamate kinase family. ArgB subfamily.

The protein localises to the cytoplasm. The enzyme catalyses N-acetyl-L-glutamate + ATP = N-acetyl-L-glutamyl 5-phosphate + ADP. Its pathway is amino-acid biosynthesis; L-arginine biosynthesis; N(2)-acetyl-L-ornithine from L-glutamate: step 2/4. Functionally, catalyzes the ATP-dependent phosphorylation of N-acetyl-L-glutamate. In Mycobacterium bovis (strain ATCC BAA-935 / AF2122/97), this protein is Acetylglutamate kinase.